Here is a 108-residue protein sequence, read N- to C-terminus: Putative bolA-like protein K11H12.1 (108 aa).

Positions 89-108 (SKWDGQKQEDSPTCRGGFGK) are disordered.

This sequence belongs to the BolA/IbaG family.

In Caenorhabditis elegans, this protein is Putative bolA-like protein K11H12.1.